An 89-amino-acid chain; its full sequence is 10 kDa fusion protein (89 aa).

The segment at 1-29 (MDENDGENLLTQPDDTGNSTNGVYAAGAP) is disordered. The span at 9–22 (LLTQPDDTGNSTNG) shows a compositional bias: polar residues. A glycan (N-linked (GlcNAc...) asparagine; by host) is linked at asparagine 18.

It belongs to the poxviruses fusion protein family. As to quaternary structure, homotrimer, covalently linked.

The protein localises to the virion membrane. This chain is 10 kDa fusion protein, found in Capra hircus (Goat).